A 69-amino-acid chain; its full sequence is Pleurain-A1 (69 aa).

The N-terminal stretch at 1–18 is a signal peptide; it reads MFTLKKTLLLLFFLGTIS. Positions 19–43 are excised as a propeptide; it reads ISLCKQERDADEDDGRKMTEEEVKR. Cysteine 63 and cysteine 69 form a disulfide bridge.

Expressed by the skin glands.

The protein localises to the secreted. In terms of biological role, antimicrobial peptide. Has activity against the Gram-positive bacterium S.aureus ATCC2592 (MIC=15 ug/ml), the Gram-negative bacteria E.coli ATCC25922 (MIC=60 ug/ml), B.dysenteriae (MIC=120 ug/ml), H.pylori NTCT11637 (MIC=30 ug/ml), and the fungus C.albicans ATCC2002 (MIC=30 ug/ml). Has little hemolytic activity on rabbit red blood cells. This chain is Pleurain-A1, found in Nidirana pleuraden (Yunnan pond frog).